The sequence spans 517 residues: GMP synthase [glutamine-hydrolyzing] (517 aa).

The Glutamine amidotransferase type-1 domain occupies 9–202 (KIIVLDYGSQ…AFNVCKAKGD (194 aa)). C86 serves as the catalytic Nucleophile. Catalysis depends on residues H176 and E178. A GMPS ATP-PPase domain is found at 203–392 (WSMDSFIDME…LGMPDEIVWR (190 aa)). 230–236 (SGGVDSS) contributes to the ATP binding site.

In terms of assembly, homodimer.

It carries out the reaction XMP + L-glutamine + ATP + H2O = GMP + L-glutamate + AMP + diphosphate + 2 H(+). It participates in purine metabolism; GMP biosynthesis; GMP from XMP (L-Gln route): step 1/1. Its function is as follows. Catalyzes the synthesis of GMP from XMP. The sequence is that of GMP synthase [glutamine-hydrolyzing] from Streptococcus mutans serotype c (strain ATCC 700610 / UA159).